Consider the following 111-residue polypeptide: Cytochrome c oxidase subunit 6A1, mitochondrial (111 aa).

A mitochondrion-targeting transit peptide spans 1–26 (MASAVLSASRVSRPLGRALPGLRRPM). The Mitochondrial matrix portion of the chain corresponds to 27 to 36 (SSGAHGEEGS). Residues 37 to 61 (ARMWKALTYFVALPGVGVSMLNVFL) traverse the membrane as a helical segment. Residues 62-111 (KSRHEEHERPPFVAYPHLRIRTKPFPWGDGNHTLFHNPHVNPLPTGYEDE) are Mitochondrial intermembrane-facing.

Belongs to the cytochrome c oxidase subunit 6A family. In terms of assembly, component of the cytochrome c oxidase (complex IV, CIV), a multisubunit enzyme composed of 14 subunits. The complex is composed of a catalytic core of 3 subunits MT-CO1, MT-CO2 and MT-CO3, encoded in the mitochondrial DNA, and 11 supernumerary subunits COX4I, COX5A, COX5B, COX6A, COX6B, COX6C, COX7A, COX7B, COX7C, COX8 and NDUFA4, which are encoded in the nuclear genome. The complex exists as a monomer or a dimer and forms supercomplexes (SCs) in the inner mitochondrial membrane with NADH-ubiquinone oxidoreductase (complex I, CI) and ubiquinol-cytochrome c oxidoreductase (cytochrome b-c1 complex, complex III, CIII), resulting in different assemblies (supercomplex SCI(1)III(2)IV(1) and megacomplex MCI(2)III(2)IV(2)).

Its subcellular location is the mitochondrion inner membrane. Its pathway is energy metabolism; oxidative phosphorylation. In terms of biological role, component of the cytochrome c oxidase, the last enzyme in the mitochondrial electron transport chain which drives oxidative phosphorylation. The respiratory chain contains 3 multisubunit complexes succinate dehydrogenase (complex II, CII), ubiquinol-cytochrome c oxidoreductase (cytochrome b-c1 complex, complex III, CIII) and cytochrome c oxidase (complex IV, CIV), that cooperate to transfer electrons derived from NADH and succinate to molecular oxygen, creating an electrochemical gradient over the inner membrane that drives transmembrane transport and the ATP synthase. Cytochrome c oxidase is the component of the respiratory chain that catalyzes the reduction of oxygen to water. Electrons originating from reduced cytochrome c in the intermembrane space (IMS) are transferred via the dinuclear copper A center (CU(A)) of subunit 2 and heme A of subunit 1 to the active site in subunit 1, a binuclear center (BNC) formed by heme A3 and copper B (CU(B)). The BNC reduces molecular oxygen to 2 water molecules unsing 4 electrons from cytochrome c in the IMS and 4 protons from the mitochondrial matrix. In Mus musculus (Mouse), this protein is Cytochrome c oxidase subunit 6A1, mitochondrial (Cox6a1).